An 818-amino-acid polypeptide reads, in one-letter code: Auxin response factor 12 (818 aa).

Residues 1 to 10 (MSSSSAASIG) show a composition bias toward low complexity. The segment at 1–24 (MSSSSAASIGPPQPPPPPAPPEEE) is disordered. The segment covering 11–20 (PPQPPPPPAP) has biased composition (pro residues). A DNA-binding region (TF-B3) is located at residues 135–237 (FCKTLTASDT…QLLLGIRRAS (103 aa)). Disordered stretches follow at residues 526–565 (NDQKQKIQPDQSYQVPTSAVLPSPTSLPSHLREKFGFSDP) and 629–648 (GSVLHNSPTSKDGSVENKIG). Positions 629 to 640 (GSVLHNSPTSKD) are enriched in polar residues. Residues 719–803 (RTFVKVYKSG…WYIKILSPED (85 aa)) enclose the PB1 domain.

This sequence belongs to the ARF family. In terms of assembly, homodimers and heterodimers. Expressed in roots, culms, leaves and young panicles.

It is found in the nucleus. Its function is as follows. Auxin response factors (ARFs) are transcriptional factors that bind specifically to the DNA sequence 5'-TGTCTC-3' found in the auxin-responsive promoter elements (AuxREs). The sequence is that of Auxin response factor 12 (ARF12) from Oryza sativa subsp. japonica (Rice).